The following is a 222-amino-acid chain: Triosephosphate isomerase (222 aa).

Residue 9 to 11 coordinates substrate; it reads NYK. Histidine 93 acts as the Electrophile in catalysis. The active-site Proton acceptor is glutamate 141. Substrate contacts are provided by residues isoleucine 146, glycine 181, and 202-203; that span reads AS.

Belongs to the triosephosphate isomerase family. Homotetramer; dimer of dimers.

It localises to the cytoplasm. It catalyses the reaction D-glyceraldehyde 3-phosphate = dihydroxyacetone phosphate. The protein operates within carbohydrate biosynthesis; gluconeogenesis. It participates in carbohydrate degradation; glycolysis; D-glyceraldehyde 3-phosphate from glycerone phosphate: step 1/1. Involved in the gluconeogenesis. Catalyzes stereospecifically the conversion of dihydroxyacetone phosphate (DHAP) to D-glyceraldehyde-3-phosphate (G3P). The polypeptide is Triosephosphate isomerase (Methanosarcina barkeri (strain Fusaro / DSM 804)).